We begin with the raw amino-acid sequence, 375 residues long: Platelet-derived growth factor receptor-like protein (375 aa).

The N-terminal stretch at 1 to 21 (MKVWLLLGLLLVHEALEDVTG) is a signal peptide. The segment at 22–64 (QHLPKNKRPKEPGENRIKPTNKKVKPKIPKMKDRDSANSAPKT) is disordered. Residues 40–50 (PTNKKVKPKIP) show a composition bias toward basic residues. The 98-residue stretch at 62 to 159 (PKTQSIMMQV…GYICRKDEAK (98 aa)) folds into the Ig-like C2-type 1 domain. The cysteines at positions 96 and 143 are disulfide-linked. N-linked (GlcNAc...) asparagine glycosylation is found at N132 and N219. The 104-residue stretch at 272 to 375 (PSTTILASSN…TTVATTVEFS (104 aa)) folds into the Ig-like C2-type 2 domain. C293 and C357 are joined by a disulfide.

Forms a complex composed of PDGFRL, TNK2 and GRB2. Expressed in colon, lung and liver.

Its subcellular location is the secreted. The chain is Platelet-derived growth factor receptor-like protein (PDGFRL) from Homo sapiens (Human).